A 928-amino-acid chain; its full sequence is Retinoblastoma-associated protein (928 aa).

Positions 1-42 (MPPKTPRKTAATAAAAAAEPPAPPPPPPPEEDPEQDSGPEDL) are disordered. Pro-2 is subject to N,N-dimethylproline. The span at 8-19 (KTAATAAAAAAE) shows a compositional bias: low complexity. Acidic residues predominate over residues 29 to 39 (PEEDPEQDSGP). Ser-37 bears the Phosphoserine mark. A Phosphoserine; by CDK1 modification is found at Ser-249. Phosphothreonine; by CDK1 is present on Thr-252. Residue Thr-356 is modified to Phosphothreonine. Thr-373 carries the phosphothreonine; by CDK1 modification. Residues 373–579 (TPVRTVMNTI…FDLIKQSKDR (207 aa)) are domain A. The pocket; binds T and E1A stretch occupies residues 373 to 771 (TPVRTVMNTI…QRLKTNILQY (399 aa)). The residue at position 567 (Ser-567) is a Phosphoserine; by CDK2. The segment at 580–639 (EGPTDHLESACPLNLPLQNNHTAADMYLSPVRSPKKKGSTTRVNSTANAETQATSAFQTQ) is spacer. The residue at position 608 (Ser-608) is a Phosphoserine. The segment at 610-632 (VRSPKKKGSTTRVNSTANAETQA) is disordered. Phosphoserine; by CHEK2 and CHEK1 is present on Ser-612. Residues 619-632 (TTRVNSTANAETQA) show a composition bias toward polar residues. Ser-624 bears the Phosphoserine mark. Residues 640–771 (KPLKSTSLSL…QRLKTNILQY (132 aa)) are domain B. The segment at 763–928 (RLKTNILQYA…SMDTSNKEEK (166 aa)) is interaction with LIMD1. The interval 771 to 928 (YASTRPPTLS…SMDTSNKEEK (158 aa)) is domain C; mediates interaction with E4F1. A phosphoserine mark is found at Ser-780, Ser-788, and Ser-795. Position 807 is a phosphoserine; by CDK1 and CDK3 (Ser-807). Lys-810 carries the N6-methyllysine; by SMYD2 modification. The residue at position 811 (Ser-811) is a Phosphoserine; by CDK1 and CDK3. Thr-821 is modified (phosphothreonine; by CDK6). A Phosphothreonine modification is found at Thr-823. At Thr-826 the chain carries Phosphothreonine; by CDK4. Thr-841 is subject to Phosphothreonine. Residue Ser-855 is modified to Phosphoserine. At Lys-860 the chain carries N6-methyllysine; by SMYD2. The Bipartite nuclear localization signal motif lies at 860 to 876 (KRSAEGSNPPKPLKKLR). Residues 860 to 928 (KRSAEGSNPP…SMDTSNKEEK (69 aa)) are disordered. N6-acetyllysine; by PCAF occurs at positions 873 and 874. The segment covering 915–928 (KMNDSMDTSNKEEK) has biased composition (basic and acidic residues).

The protein belongs to the retinoblastoma protein (RB) family. In terms of assembly, the hypophosphorylated form interacts with and sequesters the E2F1 transcription factor, thereby inhibiting E2F1 transcription. Interacts with heterodimeric E2F/DP transcription factor complexes containing TFDP1 and either E2F1, E2F3, E2F4 or E2F5, or TFDP2 and E2F4. Interacts (when hyperphosphorylated and hypophosphorylated) with PKP3; the interaction inhibits RB1 interaction with and repression of the transcription factor E2F1, potentially via sequestering RB1 to the cytoplasm. The unphosphorylated form interacts with EID1, ARID3B, KDM5A, SUV39H1, MJD2A/JHDM3A and THOC1. Interacts with the N-terminal domain of TAF1. Interacts with SNW1, ATAD5, AATF, DNMT1, LIN9, LMNA, KMT5B, KMT5C, PELP1, UHRF2 and TMPO-alpha. Interacts with GRIP1 and UBR4. Interacts with ARID4A and KDM5B. Interacts with E4F1 and LIMD1. Interacts with SMARCA4/BRG1 and HDAC1. Interacts with PSMA3 and USP4. Interacts (when methylated at Lys-860) with L3MBTL1. Interacts with CHEK2; phosphorylates RB1. Interacts with CDK1 and CDK2. Interacts with PRMT2. Interacts with CEBPA. P-TEFB complex interacts with RB1; promotes phosphorylation of RB1. Interacts with RBBP9; the interaction disrupts RB1 binding to E2F1. Interacts with KAT2B/PCAF and EP300/P300. Interacts with PAX5. Interacts (phosphorylated and unphosphorylated) with BLCAP. May interact with NDC80. As to quaternary structure, (Microbial infection) Interacts with adenovirus E1A protein. (Microbial infection) Interacts with HPV E7 protein. In terms of assembly, (Microbial infection) Interacts with SV40 large T antigen. As to quaternary structure, (Microbial infection) Interacts with human cytomegalovirus/HHV-5 proteins UL82 and UL123. (Microbial infection) Interacts with molluscum contagiosum virus protein MC007. Post-translationally, phosphorylated by CDK6 and CDK4, and subsequently by CDK2 at Ser-567 in G1, thereby releasing E2F1 which is then able to activate cell growth. Dephosphorylated at the late M phase. SV40 large T antigen, HPV E7 and adenovirus E1A bind to the underphosphorylated, active form of pRb. Phosphorylation at Thr-821 and Thr-826 promotes interaction between the C-terminal domain C and the Pocket domain, and thereby inhibits interactions with heterodimeric E2F/DP transcription factor complexes. Dephosphorylated at Ser-795 by calcineruin upon calcium stimulation. CDK3/cyclin-C-mediated phosphorylation at Ser-807 and Ser-811 is required for G0-G1 transition. Phosphorylated by CDK1 and CDK2 upon TGFB1-mediated apoptosis. N-terminus is methylated by METTL11A/NTM1. Monomethylation at Lys-810 by SMYD2 enhances phosphorylation at Ser-807 and Ser-811, and promotes cell cycle progression. Monomethylation at Lys-860 by SMYD2 promotes interaction with L3MBTL1. In terms of processing, acetylated during keratinocyte differentiation. Acetylation at Lys-873 and Lys-874 regulates subcellular localization. Can be deacetylated by SIRT1. Expressed in the retina. Expressed in foreskin keratinocytes (at protein level).

It is found in the nucleus. The protein localises to the cytoplasm. In terms of biological role, tumor suppressor that is a key regulator of the G1/S transition of the cell cycle. The hypophosphorylated form binds transcription regulators of the E2F family, preventing transcription of E2F-responsive genes. Both physically blocks E2Fs transactivating domain and recruits chromatin-modifying enzymes that actively repress transcription. Cyclin and CDK-dependent phosphorylation of RB1 induces its dissociation from E2Fs, thereby activating transcription of E2F responsive genes and triggering entry into S phase. RB1 also promotes the G0-G1 transition upon phosphorylation and activation by CDK3/cyclin-C. Directly involved in heterochromatin formation by maintaining overall chromatin structure and, in particular, that of constitutive heterochromatin by stabilizing histone methylation. Recruits and targets histone methyltransferases SUV39H1, KMT5B and KMT5C, leading to epigenetic transcriptional repression. Controls histone H4 'Lys-20' trimethylation. Inhibits the intrinsic kinase activity of TAF1. Mediates transcriptional repression by SMARCA4/BRG1 by recruiting a histone deacetylase (HDAC) complex to the c-FOS promoter. In resting neurons, transcription of the c-FOS promoter is inhibited by BRG1-dependent recruitment of a phospho-RB1-HDAC1 repressor complex. Upon calcium influx, RB1 is dephosphorylated by calcineurin, which leads to release of the repressor complex. Its function is as follows. (Microbial infection) In case of viral infections, interactions with SV40 large T antigen, HPV E7 protein or adenovirus E1A protein induce the disassembly of RB1-E2F1 complex thereby disrupting RB1's activity. The polypeptide is Retinoblastoma-associated protein (RB1) (Homo sapiens (Human)).